The chain runs to 247 residues: 2-dehydro-3-deoxy-phosphogluconate aldolase (247 aa).

The protein belongs to the DagF family.

It catalyses the reaction 2-dehydro-3-deoxy-6-phospho-D-gluconate = D-glyceraldehyde 3-phosphate + pyruvate. Functionally, involved in the catabolism of D-glucosaminate. Catalyzes the conversion of keto-3-deoxygluconate 6-phosphate (KDGP) to yield pyruvate and glyceraldehyde-3-phosphate. In Salmonella typhimurium (strain 14028s / SGSC 2262), this protein is 2-dehydro-3-deoxy-phosphogluconate aldolase.